The sequence spans 352 residues: Ribosome biogenesis protein BRX1 homolog (352 aa).

Residues Met1 to Arg55 are disordered. A compositionally biased stretch (basic and acidic residues) spans Lys9–Trp22. A compositionally biased stretch (acidic residues) spans Ser32–Asp42. The segment covering Asp43–Arg55 has biased composition (basic and acidic residues). Residues Glu63–Glu253 form the Brix domain.

This sequence belongs to the BRX1 family.

It localises to the nucleus. It is found in the nucleolus. In terms of biological role, required for biogenesis of the 60S ribosomal subunit. The protein is Ribosome biogenesis protein BRX1 homolog of Caenorhabditis elegans.